A 680-amino-acid chain; its full sequence is Pescadillo homolog (680 aa).

Residues 310–330 (LDQAKDEQTAETTEESSDTID) are disordered. One can recognise a BRCT domain in the interval 351–470 (QAGSLFAPFT…KLVRPDLYSP (120 aa)). Positions 472–680 (ATLPPHLSPW…RRKLEKGAAK (209 aa)) are disordered. Residues 496-523 (AEQEEEGEAEMAEDSDEEMEEAADEKSK) are a coiled coil. A compositionally biased stretch (acidic residues) spans 497 to 518 (EQEEEGEAEMAEDSDEEMEEAA). Positions 519–529 (DEKSKTASKDE) are enriched in basic and acidic residues. 2 stretches are compositionally biased toward acidic residues: residues 530–543 (AESE…DESV) and 551–585 (GTDD…DEEE). A compositionally biased stretch (basic and acidic residues) spans 586–596 (VARTQHQKELE). The stretch at 613-680 (ASKKKASQAK…RRKLEKGAAK (68 aa)) forms a coiled coil. Residues 616–628 (KKASQAKKIAAKK) show a composition bias toward basic residues. Over residues 629–639 (RKEEEEIERQK) the composition is skewed to basic and acidic residues.

The protein belongs to the pescadillo family. In terms of assembly, component of the NOP7 complex, composed of erb1, nop7 and ytm1. The complex is held together by erb1, which interacts with nop7 via its N-terminal domain and with ytm1 via a high-affinity interaction between the seven-bladed beta-propeller domains of the 2 proteins. The NOP7 complex associates with the 66S pre-ribosome.

Its subcellular location is the nucleus. The protein resides in the nucleolus. The protein localises to the nucleoplasm. In terms of biological role, component of the NOP7 complex, which is required for maturation of the 25S and 5.8S ribosomal RNAs and formation of the 60S ribosome. The chain is Pescadillo homolog (nop7) from Aspergillus clavatus (strain ATCC 1007 / CBS 513.65 / DSM 816 / NCTC 3887 / NRRL 1 / QM 1276 / 107).